Reading from the N-terminus, the 109-residue chain is LSM2-LSM8 complex subunit LSM8 (109 aa).

One can recognise a Sm domain in the interval 1–70; the sequence is MSATLKDYLN…IALVGLIDAE (70 aa).

The protein belongs to the snRNP Sm proteins family. As to quaternary structure, component of the heptameric LSM2-LSM8 complex that forms a seven-membered ring structure with a donut shape; an RNA strand can pass through the hole in the center of the ring structure. The LSm subunits are arranged in the order LSM8, LSM2, LSM3, LSM6, LSM5, LSM7 and LSM4. Component of the spliceosome U4/U6-U5 tri-snRNP complex composed of the U4, U6 and U5 snRNAs and at least PRP3, PRP4, PRP6, PRP8, PRP18, PRP31, PRP38, SNU13, SNU23, SNU66, SNU114, SPP381, SMB1, SMD1, SMD2, SMD3, SMX2, SMX3, LSM2, LSM3, LSM4, LSM5, LSM6, LSM7, LSM8, BRR2 and DIB1.

The protein resides in the nucleus. The protein localises to the cytoplasm. Functionally, component of the nuclear LSM2-LSM8 complex, which is involved in spliceosome assembly. The LSM2-LSM8 complex plays a role in the biogenesis of the spliceosomal U4/U6-U5 tri-snRNP complex by accelerating PRP24-mediated annealing of U4/U6 di-snRNA. The LSM2-LSM8 complex binds U6 snRNA terminating with a non-cyclic 3' phosphate group. LSM2-LSM8 is probably also involved in degradation of nuclear pre-mRNA by targeting them for decapping. LSM2-LSM8 could be involved in processing of pre-tRNAs, pre-rRNAs and U3 snoRNA, although involvement may be indirect. The chain is LSM2-LSM8 complex subunit LSM8 (LSM8) from Saccharomyces cerevisiae (strain ATCC 204508 / S288c) (Baker's yeast).